The sequence spans 1165 residues: Integrin alpha-L (1165 aa).

The N-terminal stretch at 1–23 is a signal peptide; that stretch reads MNSCIIVLRLLLSGPFVFAPAWS. At 24 to 1084 the chain is on the extracellular side; sequence YNLDVRHVQN…MKVDLVYEKE (1061 aa). FG-GAP repeat units follow at residues 29 to 80 and 81 to 138; these read RHVQ…DCLP and VTLS…GPVL. N-linked (GlcNAc...) asparagine glycosylation is present at N33. A disulfide bridge connects residues C71 and C78. An N-linked (GlcNAc...) asparagine glycan is attached at N86. An intrachain disulfide couples C108 to C126. A VWFA domain is found at 153-324; that stretch reads DLVFLFDGSM…EKLKDLFTEL (172 aa). N185 carries an N-linked (GlcNAc...) asparagine glycan. 5 FG-GAP repeats span residues 335–386, 387–442, 443–503, 504–560, and 564–624; these read SKQD…SSTF, VGNE…GGPW, SQIQ…EFQM, VSEL…GLSP, and QRIE…FSPA. Ca(2+)-binding residues include D465, D467, D469, E473, D527, N529, D531, D535, D587, D591, and D595. N-linked (GlcNAc...) asparagine glycosylation is found at N646, N667, and N723. C650 and C704 are disulfide-bonded. 2 cysteine pairs are disulfide-bonded: C768/C774 and C842/C858. N859, N894, and N929 each carry an N-linked (GlcNAc...) asparagine glycan. Disulfide bonds link C994–C1009 and C1017–C1048. Residues N1056 and N1067 are each glycosylated (N-linked (GlcNAc...) asparagine). Residues 1085 to 1105 form a helical membrane-spanning segment; that stretch reads MLYLYVLSGIGGLLLLFLIFI. The Cytoplasmic portion of the chain corresponds to 1106 to 1165; the sequence is ALYKVGFFKRNLKEKMEANVDASSEIPGEDAGQPELEKECKDPGCLEPLQKTDEDGSGGD. The GFFKR motif signature appears at 1111–1115; it reads GFFKR. Residues 1123 to 1165 are disordered; it reads ANVDASSEIPGEDAGQPELEKECKDPGCLEPLQKTDEDGSGGD. Residues 1140 to 1159 are compositionally biased toward basic and acidic residues; the sequence is ELEKECKDPGCLEPLQKTDE.

It belongs to the integrin alpha chain family. Heterodimer of an alpha and a beta subunit. The ITGAL alpha subunit associates with the ITGB2 beta subunit. Interacts with THBD. Interacts with CD226. Post-translationally, in resting T-cells, up to 40% of surface ITGAL is constitutively phosphorylated. Phosphorylation causes conformational changes needed for ligand binding and is necessary for the activation by some physiological agents.

Its subcellular location is the cell membrane. Integrin ITGAL/ITGB2 is a receptor for ICAM1, ICAM2, ICAM3 and ICAM4. Integrin ITGAL/ITGB2 is a receptor for F11R. Integrin ITGAL/ITGB2 is a receptor for the secreted form of ubiquitin-like protein ISG15; the interaction is mediated by ITGAL. Involved in a variety of immune phenomena including leukocyte-endothelial cell interaction, cytotoxic T-cell mediated killing, and antibody dependent killing by granulocytes and monocytes. Contributes to natural killer cell cytotoxicity. Involved in leukocyte adhesion and transmigration of leukocytes including T-cells and neutrophils. Acts as a platform at the immunological synapse to translate TCR engagement and density of the ITGAL ligand ICAM1 into graded adhesion. Required for generation of common lymphoid progenitor cells in bone marrow, indicating the role in lymphopoiesis. Integrin ITGAL/ITGB2 in association with ICAM3, contributes to apoptotic neutrophil phagocytosis by macrophages. The sequence is that of Integrin alpha-L from Bos taurus (Bovine).